The following is a 410-amino-acid chain: LL-diaminopimelate aminotransferase (410 aa).

Residues Tyr-15 and Gly-42 each coordinate substrate. Residues Tyr-72, 108-109 (AK), Tyr-132, Asn-188, Tyr-219, and 247-249 (SFS) each bind pyridoxal 5'-phosphate. Residues Lys-109, Tyr-132, and Asn-188 each coordinate substrate. Lys-250 bears the N6-(pyridoxal phosphate)lysine mark. Arg-258 and Asn-293 together coordinate pyridoxal 5'-phosphate. Residues Asn-293 and Arg-389 each coordinate substrate.

Belongs to the class-I pyridoxal-phosphate-dependent aminotransferase family. LL-diaminopimelate aminotransferase subfamily. As to quaternary structure, homodimer. It depends on pyridoxal 5'-phosphate as a cofactor.

It catalyses the reaction (2S,6S)-2,6-diaminopimelate + 2-oxoglutarate = (S)-2,3,4,5-tetrahydrodipicolinate + L-glutamate + H2O + H(+). It participates in amino-acid biosynthesis; L-lysine biosynthesis via DAP pathway; LL-2,6-diaminopimelate from (S)-tetrahydrodipicolinate (aminotransferase route): step 1/1. Its function is as follows. Involved in the synthesis of meso-diaminopimelate (m-DAP or DL-DAP), required for both lysine and peptidoglycan biosynthesis. Catalyzes the direct conversion of tetrahydrodipicolinate to LL-diaminopimelate. The protein is LL-diaminopimelate aminotransferase of Bacteroides fragilis (strain YCH46).